Here is a 358-residue protein sequence, read N- to C-terminus: 4-hydroxy-3-methylbut-2-en-1-yl diphosphate synthase (flavodoxin) (358 aa).

Positions 270, 273, 305, and 312 each coordinate [4Fe-4S] cluster.

The protein belongs to the IspG family. [4Fe-4S] cluster is required as a cofactor.

It carries out the reaction (2E)-4-hydroxy-3-methylbut-2-enyl diphosphate + oxidized [flavodoxin] + H2O + 2 H(+) = 2-C-methyl-D-erythritol 2,4-cyclic diphosphate + reduced [flavodoxin]. It participates in isoprenoid biosynthesis; isopentenyl diphosphate biosynthesis via DXP pathway; isopentenyl diphosphate from 1-deoxy-D-xylulose 5-phosphate: step 5/6. Functionally, converts 2C-methyl-D-erythritol 2,4-cyclodiphosphate (ME-2,4cPP) into 1-hydroxy-2-methyl-2-(E)-butenyl 4-diphosphate. The chain is 4-hydroxy-3-methylbut-2-en-1-yl diphosphate synthase (flavodoxin) from Vesicomyosocius okutanii subsp. Calyptogena okutanii (strain HA).